Consider the following 165-residue polypeptide: RNA pyrophosphohydrolase (165 aa).

The 142-residue stretch at 13–154 folds into the Nudix hydrolase domain; that stretch reads PYRQGVGIML…KRPVYEQVVA (142 aa). Residues 46-67 carry the Nudix box motif; the sequence is GGIDAGEDPETAAWREMEEEIG.

Belongs to the Nudix hydrolase family. RppH subfamily. The cofactor is a divalent metal cation.

In terms of biological role, accelerates the degradation of transcripts by removing pyrophosphate from the 5'-end of triphosphorylated RNA, leading to a more labile monophosphorylated state that can stimulate subsequent ribonuclease cleavage. This chain is RNA pyrophosphohydrolase, found in Rhodospirillum rubrum (strain ATCC 11170 / ATH 1.1.1 / DSM 467 / LMG 4362 / NCIMB 8255 / S1).